A 263-amino-acid polypeptide reads, in one-letter code: MKVVTGATDGIGRSYALDLARRGFNIFLISRTKSKLVKTKKQILNKYSDIEVRYAICDFTRVSYEDYKRLLHSLNEVDIGILINNVGMCFDNPEVLHRVEGGIDTLTNVINVNILPVTLLTAGILPQMMARKSGIIVNIGSAAGSIHMAKWSVYSATKKYIEWFTSILQKEYENEGIICQTITPLLVSTNMIKNPLSSIFCPNSDSFAKSSLNTIGNSSSTTGYITHQIQFELIKFVPEIIIDLFVKNLNNQLLDYQLDKKRV.

Tyrosine 154 functions as the Proton acceptor in the catalytic mechanism.

This sequence belongs to the short-chain dehydrogenases/reductases (SDR) family. 17-beta-HSD 3 subfamily.

The sequence is that of Putative steroid dehydrogenase 4 (stdh-4) from Caenorhabditis elegans.